The primary structure comprises 224 residues: 7-cyano-7-deazaguanine synthase (224 aa).

10–20 provides a ligand contact to ATP; that stretch reads LSGGLDSATVV. Zn(2+)-binding residues include Cys-189, Cys-199, Cys-202, and Cys-205.

Belongs to the QueC family. Zn(2+) serves as cofactor.

It carries out the reaction 7-carboxy-7-deazaguanine + NH4(+) + ATP = 7-cyano-7-deazaguanine + ADP + phosphate + H2O + H(+). The protein operates within purine metabolism; 7-cyano-7-deazaguanine biosynthesis. Its function is as follows. Catalyzes the ATP-dependent conversion of 7-carboxy-7-deazaguanine (CDG) to 7-cyano-7-deazaguanine (preQ(0)). This is 7-cyano-7-deazaguanine synthase from Pseudomonas paraeruginosa (strain DSM 24068 / PA7) (Pseudomonas aeruginosa (strain PA7)).